A 205-amino-acid chain; its full sequence is Isochorismatase domain-containing protein 2 (205 aa).

The protein belongs to the isochorismatase family.

In Xenopus laevis (African clawed frog), this protein is Isochorismatase domain-containing protein 2 (isoc2).